Here is a 109-residue protein sequence, read N- to C-terminus: Large ribosomal subunit protein uL24 (109 aa).

Belongs to the universal ribosomal protein uL24 family. Part of the 50S ribosomal subunit.

In terms of biological role, one of two assembly initiator proteins, it binds directly to the 5'-end of the 23S rRNA, where it nucleates assembly of the 50S subunit. Functionally, one of the proteins that surrounds the polypeptide exit tunnel on the outside of the subunit. The polypeptide is Large ribosomal subunit protein uL24 (Ehrlichia ruminantium (strain Gardel)).